The sequence spans 293 residues: NAD-dependent protein deacetylase (293 aa).

The Deacetylase sirtuin-type domain maps to 5–282 (PAHDHHTLQD…LHAPPHLPRA (278 aa)). NAD(+) is bound by residues 27 to 47 (GAGCSTDSGIPDYRDLQGGWK) and 105 to 108 (QNVD). His-123 serves as the catalytic Proton acceptor. Zn(2+) contacts are provided by Cys-131, Cys-134, Cys-182, and Cys-185. Residues 222–224 (GSS), 248–250 (NFG), and Cys-266 contribute to the NAD(+) site.

The protein belongs to the sirtuin family. Class II subfamily. The cofactor is Zn(2+).

It localises to the cytoplasm. It carries out the reaction N(6)-acetyl-L-lysyl-[protein] + NAD(+) + H2O = 2''-O-acetyl-ADP-D-ribose + nicotinamide + L-lysyl-[protein]. NAD-dependent protein deacetylase which modulates the activities of several enzymes which are inactive in their acetylated form. This is NAD-dependent protein deacetylase from Xanthomonas axonopodis pv. citri (strain 306).